A 362-amino-acid chain; its full sequence is MTILHEEINFLKKDELNINLKCLDKKERYKIWRRIPKCELHCHLDLCFSLEFFLKCVRKYNLQPDLTDDEVVDYYLFKDKGKSLNEFIERSRRVTDIFINYDIIKDIAKNAVFNKYKEGVILIEFRYSPSYIAYKYNLCIDLIHKTIVEGINEAVEKLNHKIHVGLICIGETGISEESLRKAAEFCVKNKKDFVGFDHAGHERDLKPYKEIYDYVRENGIPLTIHAGEDLTLPNLNTIYSAIEVLKAKRIGHGIRVIESEDLINLIKKNDILLEICPISNLLLNNVKSMDTHPIKKLYDSGIKVSVNTDDPGMFLTEINDEYEELYLNLNFNLEDFMKMNLWALEKSFVKSEIKDKLKKLYF.

Zn(2+)-binding residues include histidine 41 and histidine 43. 43-45 (HLD) lines the a purine D-ribonucleoside pocket. Residues 169 to 183 (IGETGISEESLRKAA) are gating helix loop; regulates binding affinity for substrates and thus substrate selectivity. Glycine 200 lines the a purine D-ribonucleoside pocket. Histidine 225 is a binding site for Zn(2+). The a purine D-ribonucleoside site is built by glutamate 228, histidine 252, and aspartate 309. Position 309 (aspartate 309) interacts with Zn(2+).

This sequence belongs to the metallo-dependent hydrolases superfamily. Adenosine and AMP deaminases family. Requires Zn(2+) as cofactor.

It carries out the reaction adenosine + H2O + H(+) = inosine + NH4(+). The protein operates within purine metabolism; purine nucleoside salvage. Its activity is regulated as follows. Inhibited by coformycin but not by methylthiocoformycin (MT-coformycin). Functionally, catalyzes the hydrolytic deamination of adenosine to produce inosine. Unlike other Plasmodium adenosine deaminases, does not catalyze the deamination of 5'-methylthioadenosine (MTA). Plays an essential role in the purine salvage pathway which allows the parasite to use host cell purines for the synthesis of nucleic acids. The protein is Adenosine deaminase of Plasmodium gallinaceum.